Reading from the N-terminus, the 155-residue chain is Aspartate carbamoyltransferase regulatory chain (155 aa).

Residues Cys-111, Cys-116, Cys-137, and Cys-140 each contribute to the Zn(2+) site.

This sequence belongs to the PyrI family. As to quaternary structure, contains catalytic and regulatory chains. Zn(2+) is required as a cofactor.

Functionally, involved in allosteric regulation of aspartate carbamoyltransferase. The protein is Aspartate carbamoyltransferase regulatory chain of Haloarcula marismortui (strain ATCC 43049 / DSM 3752 / JCM 8966 / VKM B-1809) (Halobacterium marismortui).